The following is a 445-amino-acid chain: 26S proteasome regulatory subunit RPN5 (445 aa).

Position 2 is an N-acetylserine (Ser2). Residues 233-407 (EYLEVAQYLQ…KIVNFEKPKN (175 aa)) form the PCI domain.

The protein belongs to the proteasome subunit p55 family. Post-translationally, N-acetylated by NAT1.

Functionally, acts as a regulatory subunit of the 26S proteasome which is involved in the ATP-dependent degradation of ubiquitinated proteins. The chain is 26S proteasome regulatory subunit RPN5 (RPN5) from Saccharomyces cerevisiae (strain ATCC 204508 / S288c) (Baker's yeast).